Consider the following 294-residue polypeptide: uncharacterized protein (294 aa).

Disordered stretches follow at residues 25–59 (VQVY…RVRR) and 77–141 (LKDD…FEAP). The span at 86-139 (YEELEDDDDDESIEEESDSEFEGESSSDEEESSYDSDSDYDSETEPEDSDDDFE) shows a compositional bias: acidic residues. Residues 201–234 (IKFYKRNTTFTEEELAEIEEDLLAEVKARYNNMK) are a coiled coil. Basic and acidic residues predominate over residues 242–259 (TIETTEDDKKAGEVNKYD). Residues 242–294 (TIETTEDDKKAGEVNKYDIDDDFIEKTESDEEEEITEDDSSEQETVVVEPVDE) form a disordered region. The segment covering 260–283 (IDDDFIEKTESDEEEEITEDDSSE) has biased composition (acidic residues).

This is an uncharacterized protein from Magallana gigas (Pacific oyster).